The chain runs to 115 residues: Peptidyl-tRNA hydrolase (115 aa).

It belongs to the PTH2 family.

Its subcellular location is the cytoplasm. The enzyme catalyses an N-acyl-L-alpha-aminoacyl-tRNA + H2O = an N-acyl-L-amino acid + a tRNA + H(+). The natural substrate for this enzyme may be peptidyl-tRNAs which drop off the ribosome during protein synthesis. The polypeptide is Peptidyl-tRNA hydrolase (Methanococcoides burtonii (strain DSM 6242 / NBRC 107633 / OCM 468 / ACE-M)).